Here is a 102-residue protein sequence, read N- to C-terminus: Small ribosomal subunit protein uS10 (102 aa).

It belongs to the universal ribosomal protein uS10 family. In terms of assembly, part of the 30S ribosomal subunit.

Its function is as follows. Involved in the binding of tRNA to the ribosomes. The chain is Small ribosomal subunit protein uS10 from Streptococcus pyogenes serotype M12 (strain MGAS2096).